The chain runs to 334 residues: Leucine-rich repeat-containing protein 39 (334 aa).

LRR repeat units lie at residues 59-82 (EDGR…LLKL), 83-105 (NQLQ…IGRF), 106-128 (QHLI…IGLL), 129-151 (TRLQ…LSNC), 153-175 (SLEK…LSKL), 176-198 (LKLT…VLDM), 199-221 (PALE…LDRM), 223-244 (SLHT…IRNM), 245-269 (KNLG…EMTS), and 272-295 (FVNF…VDGE).

As to quaternary structure, interacts with MYH7 (via C-terminus). In terms of tissue distribution, expressed in heart and skeletal muscle (at protein level). Also detected in kidney (at protein level). Not detected in other tissues tested (at protein level).

Its subcellular location is the cytoplasm. The protein localises to the myofibril. It localises to the sarcomere. It is found in the m line. Component of the sarcomeric M-band which plays a role in myocyte response to biomechanical stress. May regulate expression of other M-band proteins via an SRF-dependent pathway. Important for normal contractile function in heart. This is Leucine-rich repeat-containing protein 39 from Rattus norvegicus (Rat).